The primary structure comprises 593 residues: MPPLGVLLLLVALGHSTQGHRPLPIRKAHKFDWWERGNFYQIYPRSFKDSDGDGIGDLKGITQTIDYLKTIGIDGVWLSPIFKSPMNDFGYDISDFYAIQEEYGTMEDFEELAAKCASIGLKLILDFVPNHSSDEHEHFRLSEEGIEPYKDYYIWHSGVLDANGTRHPPSNWISVFRGSAWQWSDKRQQYYLHQFQKKQPDLNYRNPALVEEMKNVMRFWLNKGIAGFRIDALPYLFESEEVDGHYRDEPLSGQATDDPDNPAYLTHTETKDQPETYDMVHQWRQVVDEYTARDNFTRIILTEAYTAVQNMTRFYGTPAAPGAQIPFNFQLITLLTVNSTGRDFVNAVQSWTRAMPSGAIANWVLGNHDNSRIASRLGVARADLYNIALQTLPGIAVTYYGEEIAMVDQWISWNDTIDPAACNADPATYELYSRDPVRTPFQWSNGTNAGFSNASRTWLPVADGYRELNVAAQLAAPRSHLKTFMQLTAYRKRRLLAEGNFVLRTVGRDLVMYKRSVPGVGYVVVALNFGPEPATLPVASQFPGTGEHWLKVIASSLQAQPQAGTWINTRLYKLAPDSGIVLERLTGRNDLMT.

A signal peptide spans 1-19 (MPPLGVLLLLVALGHSTQG). 6 residues coordinate Ca(2+): Asp49, Asp51, Asp53, Ile55, Asp57, and Asn130. N-linked (GlcNAc...) asparagine glycosylation is found at Asn130 and Asn163. Ca(2+)-binding residues include Asp201, Tyr235, Leu236, and Glu238. 6 N-linked (GlcNAc...) asparagine glycosylation sites follow: Asn295, Asn310, Asn338, Asn414, Asn445, and Asn453. Asn338 contacts N-acetyl-beta-D-glucosamine.

The protein belongs to the glycosyl hydrolase 13 family. Saliva (at protein level). Proximal lateral lobes of the salivary gland (at protein level).

The protein localises to the secreted. It catalyses the reaction Hydrolysis of terminal, non-reducing (1-&gt;4)-linked alpha-D-glucose residues with release of alpha-D-glucose.. In terms of biological role, functions as a glucosidase that shows high activity toward sucrose, a major component of nectar. Assists the mosquito in its sugar-feeding capabilities. The protein is Salivary alpha-glucosidase of Anopheles gambiae (African malaria mosquito).